The chain runs to 814 residues: Pre-rRNA-processing protein TSR1 homolog (814 aa).

The interval 1-67 is disordered; it reads MADHAFHRPG…NQMNQLRKNK (67 aa). Positions 16–27 are enriched in basic residues; that stretch reads NKAHKTGRHRSK. The 166-residue stretch at 84–249 folds into the Bms1-type G domain; sequence APFLVCLLPM…MRRIGGQKKR (166 aa). 2 disordered regions span residues 316 to 357 and 392 to 448; these read PYKL…DAEQ and WIPD…EEFQ. Basic and acidic residues predominate over residues 317 to 340; it reads YKLDKSRDGENSEVRLLDRSDPSK. A compositionally biased stretch (acidic residues) spans 395 to 426; sequence DVEEVEDPDGKDDDDMSEDDDDDKEDDNEDFM. A compositionally biased stretch (basic and acidic residues) spans 431 to 442; that stretch reads KSFEDEYEKRDS. Residue Thr-444 is modified to Phosphothreonine.

This sequence belongs to the TRAFAC class translation factor GTPase superfamily. Bms1-like GTPase family. TSR1 subfamily.

It is found in the nucleus. Its subcellular location is the nucleolus. Required during maturation of the 40S ribosomal subunit in the nucleolus. This Drosophila melanogaster (Fruit fly) protein is Pre-rRNA-processing protein TSR1 homolog.